The sequence spans 414 residues: Ceramide synthase 5 (414 aa).

The Lumenal portion of the chain corresponds to 1–43; it reads MATAAAETLGLLWGWLWSESFWLPQNVSWADLEGPGDGYGYPR. Asn-26 carries an N-linked (GlcNAc...) asparagine glycan. A helical membrane pass occupies residues 44-64; it reads AQHVLSVFPLAVCIFSVRMLF. Residues 75–136 form a homeobox-like region; sequence RVGIKDSPVN…RHRRNQDKPP (62 aa). The 202-residue stretch at 139 to 340 folds into the TLC domain; that stretch reads TKFCESMWRF…IVQTASKALS (202 aa). The next 4 helical transmembrane spans lie at 148–168, 187–207, 214–234, and 272–292; these read FTYYLCIFCYGIRFLWSMPWF, LYYYYITQLAFYWSLMFSQFI, FLMMFIHHMIGIMLTTFSYVN, and LFVIFGAAFIVSRLAIFPLWI. The Last loop motif signature appears at 299-309; the sequence is ESWEIIGPYPS. A helical membrane pass occupies residues 312–332; that stretch reads LFNALLLILQVLHAIWSYLIV. Topologically, residues 333–414 are cytoplasmic; the sequence is QTASKALSRG…RASPHLHSCD (82 aa). The interval 347 to 373 is disordered; it reads DDRSDVESSSEEEDETTHKNNLSGSSS.

As to quaternary structure, interacts with PAQR4; the interaction regulates the stability and activity of CERS5 and is inhibited in presence of ceramides. In terms of processing, phosphorylated at the C-terminus by CK2. In terms of tissue distribution, ubiquitously expressed, with highest levels in testis and kidney. Expressed in pulmonary epithelia.

It localises to the endoplasmic reticulum membrane. It carries out the reaction a sphingoid base + hexadecanoyl-CoA = an N-hexadecanoyl-sphingoid base + CoA + H(+). It catalyses the reaction sphinganine + hexadecanoyl-CoA = N-hexadecanoylsphinganine + CoA + H(+). The catalysed reaction is hexadecasphinganine + hexadecanoyl-CoA = N-hexadecanoylhexadecasphinganine + CoA + H(+). The enzyme catalyses sphing-4-enine + hexadecanoyl-CoA = N-hexadecanoylsphing-4-enine + CoA + H(+). It carries out the reaction 2-hydroxyhexadecanoyl-CoA + sphinganine = N-(2-hydroxyhexadecanoyl)-sphinganine + CoA + H(+). It catalyses the reaction sphinganine + tetradecanoyl-CoA = N-(tetradecanoyl)-sphinganine + CoA + H(+). The catalysed reaction is sphinganine + octadecanoyl-CoA = N-(octadecanoyl)-sphinganine + CoA + H(+). The enzyme catalyses sphinganine + (9Z)-octadecenoyl-CoA = N-(9Z-octadecenoyl)-sphinganine + CoA + H(+). It carries out the reaction a fatty acyl-CoA + sphing-4-enine = an N-acylsphing-4-enine + CoA + H(+). It catalyses the reaction tetracosenoyl-CoA + sphing-4-enine = N-(tetracosenoyl)-sphing-4-enine + CoA + H(+). Its pathway is lipid metabolism; sphingolipid metabolism. Inhibited by fumonisin B1. In terms of biological role, ceramide synthase that catalyzes the transfer of the acyl chain from acyl-CoA to a sphingoid base, with high selectivity toward palmitoyl-CoA (hexadecanoyl-CoA; C16:0-CoA). Can use other acyl donors, but with less efficiency. N-acylates sphinganine and sphingosine bases to form dihydroceramides and ceramides in de novo synthesis and salvage pathways, respectively. Plays a role in de novo ceramide synthesis and surfactant homeostasis in pulmonary epithelia. The chain is Ceramide synthase 5 from Mus musculus (Mouse).